The sequence spans 788 residues: Protein HHLF1 (788 aa).

3 disordered regions span residues 1–82, 366–385, and 609–663; these read MAQR…NFWH, TGTA…ETEA, and IHKK…SRLP. Gly residues predominate over residues 16–25; it reads RGRGAGGPSG. A compositionally biased stretch (low complexity) spans 26 to 56; sequence VGSSPPSSCVPMGAPSTAGTGASAAATTTPG. The segment at 74–248 is RNA-binding; the sequence is SGNNSNFWHG…HGAGEVVRLY (175 aa). Residues 650 to 659 are compositionally biased toward basic and acidic residues; that stretch reads LRRDDEDWKP. The interaction with host EIF2AK2/PKR stretch occupies residues 671–788; the sequence is LDETFWVLGS…IATHYHYNAQ (118 aa).

It belongs to the herpesviridae US22 family. In terms of assembly, interacts with host EIF2AK2/PKR; this interaction retains EIF2AK2 to the host nucleus and prevents its activation. Interaction (via N-terminus) with host BECN1; this interaction inhibits host autophagy. Interacts with the viral DNA polymerase accessory subunit UL44. Interacts with host HSPA5.

The protein localises to the virion. Its subcellular location is the host cytoplasm. The protein resides in the host nucleus. Inhibits the establishment of the antiviral state and the integrated stress response (ISR) in the infected cell. Prevents the phosphorylation of the host eukaryotic translation initiation factor eIF-2alpha/EIF2S1 and thus the shutoff of viral and cellular protein synthesis by directly interacting with EIF2AK2/PKR. Prevents stress granule formation in response to eIF-2alpha/EIF2S1 phosphorylation, thereby rescuing viral replication and protein synthesis. Also inhibits host autophagy by interacting with host Beclin-1/BECN1. In Homo sapiens (Human), this protein is Protein HHLF1 (TRS1).